Consider the following 190-residue polypeptide: LIM domain-containing protein WLIM1 (190 aa).

The residue at position 2 (Ala-2) is an N-acetylalanine. An LIM zinc-binding 1 domain is found at Gln-8–Arg-68. The segment at Lys-74–Lys-98 is disordered. Residues Gly-83–Ala-95 are compositionally biased toward basic and acidic residues. In terms of domain architecture, LIM zinc-binding 2 spans Glu-108–Glu-168.

Interacts with F-actin. In terms of tissue distribution, expressed in roots, leaves, stems, flowers and siliques. Not detected in pollen.

It is found in the cytoplasm. It localises to the cytoskeleton. Functionally, binds to actin filaments and promotes cross-linking into thick bundles. Has an actin-stabilizing activity. The actin regulatory activities are not regulated by pH and [Ca(2+)]. The protein is LIM domain-containing protein WLIM1 of Arabidopsis thaliana (Mouse-ear cress).